We begin with the raw amino-acid sequence, 386 residues long: Succinate--CoA ligase [ADP-forming] subunit beta (386 aa).

An ATP-grasp domain is found at 9–244; it reads KQVLRSSNLN…DSQIDAKEAA (236 aa). Residues Lys46, 53–55, Glu99, Leu102, and Glu107 each bind ATP; that span reads GRG. Mg(2+) contacts are provided by Asn199 and Asp213. Residues Asn264 and 321–323 each bind substrate; that span reads GIV.

The protein belongs to the succinate/malate CoA ligase beta subunit family. In terms of assembly, heterotetramer of two alpha and two beta subunits. Mg(2+) is required as a cofactor.

It carries out the reaction succinate + ATP + CoA = succinyl-CoA + ADP + phosphate. It catalyses the reaction GTP + succinate + CoA = succinyl-CoA + GDP + phosphate. It functions in the pathway carbohydrate metabolism; tricarboxylic acid cycle; succinate from succinyl-CoA (ligase route): step 1/1. Succinyl-CoA synthetase functions in the citric acid cycle (TCA), coupling the hydrolysis of succinyl-CoA to the synthesis of either ATP or GTP and thus represents the only step of substrate-level phosphorylation in the TCA. The beta subunit provides nucleotide specificity of the enzyme and binds the substrate succinate, while the binding sites for coenzyme A and phosphate are found in the alpha subunit. This chain is Succinate--CoA ligase [ADP-forming] subunit beta, found in Thiobacillus denitrificans (strain ATCC 25259 / T1).